The following is a 244-amino-acid chain: tRNA pseudouridine synthase A (244 aa).

The active-site Nucleophile is the D52. Y110 provides a ligand contact to substrate.

Belongs to the tRNA pseudouridine synthase TruA family. Homodimer.

The catalysed reaction is uridine(38/39/40) in tRNA = pseudouridine(38/39/40) in tRNA. Formation of pseudouridine at positions 38, 39 and 40 in the anticodon stem and loop of transfer RNAs. In Finegoldia magna (strain ATCC 29328 / DSM 20472 / WAL 2508) (Peptostreptococcus magnus), this protein is tRNA pseudouridine synthase A.